We begin with the raw amino-acid sequence, 273 residues long: Octanoyltransferase LipM (273 aa).

One can recognise a BPL/LPL catalytic domain in the interval 32–240; the sequence is GEIPPTLRFY…GFSEILNIEL (209 aa). The active-site Acyl-thioester intermediate is cysteine 142.

It belongs to the octanoyltransferase LipM family. As to quaternary structure, monomer.

The enzyme catalyses octanoyl-[ACP] + L-lysyl-[protein] = N(6)-octanoyl-L-lysyl-[protein] + holo-[ACP] + H(+). It functions in the pathway protein modification; protein lipoylation via endogenous pathway; protein N(6)-(lipoyl)lysine from octanoyl-[acyl-carrier-protein]. In terms of biological role, catalyzes the transfer of endogenously produced octanoic acid from octanoyl-acyl-carrier-protein onto the lipoyl domain of GcvH, an intermediate carrier during protein lipoylation. The sequence is that of Octanoyltransferase LipM from Oceanobacillus iheyensis (strain DSM 14371 / CIP 107618 / JCM 11309 / KCTC 3954 / HTE831).